The following is an 867-amino-acid chain: Armadillo repeat-containing protein 2 (867 aa).

Disordered stretches follow at residues methionine 1–phenylalanine 115 and threonine 214–lysine 252. Polar residues-rich tracts occupy residues proline 18–glutamate 28, valine 40–glutamate 50, and serine 60–proline 69. Low complexity-rich tracts occupy residues serine 70–serine 81 and serine 234–serine 243. ARM repeat units follow at residues isoleucine 262–glutamate 301, asparagine 304–valine 344, glutamate 363–phenylalanine 403, leucine 408–valine 449, serine 462–serine 503, aspartate 506–alanine 547, glutamine 551–glutamate 589, histidine 591–isoleucine 616, glycine 619–tyrosine 662, glutamine 664–glutamine 705, histidine 707–valine 746, and lysine 748–glutamate 790.

In terms of tissue distribution, expressed at higher level in testis.

Its function is as follows. Required for sperm flagellum axoneme organization and function. Involved in axonemal central pair complex assembly and/or stability. The polypeptide is Armadillo repeat-containing protein 2 (Homo sapiens (Human)).